A 541-amino-acid chain; its full sequence is Pseudokinase FAM20A (541 aa).

The signal sequence occupies residues 1–33 (MPGLRRDRLLALLLLGALFSADLYFHLWPQVQR). 3 N-linked (GlcNAc...) asparagine glycosylation sites follow: asparagine 70, asparagine 145, and asparagine 287. 4 disulfide bridges follow: cysteine 314-cysteine 330, cysteine 319-cysteine 323, cysteine 378-cysteine 452, and cysteine 453-cysteine 512. A glycan (N-linked (GlcNAc...) asparagine) is linked at asparagine 388. Asparagine 538 is a glycosylation site (N-linked (GlcNAc...) asparagine).

It belongs to the FAM20 family. Interacts with FAM20C; probably forming a heterotetramer of 2 subunits of FAM20A and 2 subunits of FAM20C. Post-translationally, N-glycosylated. In the mammary gland, expressed at higher levels in lactating mice than in virgin mice. Observed throughout the tissues of the mandibular incisor, including the secretory and maturation stage ameloblasts, the suprabasal layers of the gingival epithelium and the odontoblasts. Weak expression in the enamel matrix.

It is found in the secreted. It localises to the golgi apparatus. The protein localises to the endoplasmic reticulum. In terms of biological role, pseudokinase that acts as an allosteric activator of the Golgi serine/threonine protein kinase FAM20C and is involved in biomineralization of teeth. Forms a complex with FAM20C and increases the ability of FAM20C to phosphorylate the proteins that form the 'matrix' that guides the deposition of the enamel minerals. This is Pseudokinase FAM20A from Mus musculus (Mouse).